The primary structure comprises 181 residues: Small ribosomal subunit protein uS4 (181 aa).

Residues R108 to R180 form the S4 RNA-binding domain.

The protein belongs to the universal ribosomal protein uS4 family. Part of the 30S ribosomal subunit. Contacts protein S5. The interaction surface between S4 and S5 is involved in control of translational fidelity.

In terms of biological role, one of the primary rRNA binding proteins, it binds directly to 16S rRNA where it nucleates assembly of the body of the 30S subunit. Its function is as follows. With S5 and S12 plays an important role in translational accuracy. The protein is Small ribosomal subunit protein uS4 of Methanocorpusculum labreanum (strain ATCC 43576 / DSM 4855 / Z).